The following is a 266-amino-acid chain: Thiazole synthase (266 aa).

Lysine 106 (schiff-base intermediate with DXP) is an active-site residue. 1-deoxy-D-xylulose 5-phosphate-binding positions include glycine 167, 193-194, and 215-216; these read AG and NT.

This sequence belongs to the ThiG family. As to quaternary structure, homotetramer. Forms heterodimers with either ThiH or ThiS.

The protein resides in the plastid. Its subcellular location is the chloroplast. It carries out the reaction [ThiS sulfur-carrier protein]-C-terminal-Gly-aminoethanethioate + 2-iminoacetate + 1-deoxy-D-xylulose 5-phosphate = [ThiS sulfur-carrier protein]-C-terminal Gly-Gly + 2-[(2R,5Z)-2-carboxy-4-methylthiazol-5(2H)-ylidene]ethyl phosphate + 2 H2O + H(+). The protein operates within cofactor biosynthesis; thiamine diphosphate biosynthesis. Its function is as follows. Catalyzes the rearrangement of 1-deoxy-D-xylulose 5-phosphate (DXP) to produce the thiazole phosphate moiety of thiamine. Sulfur is provided by the thiocarboxylate moiety of the carrier protein ThiS. In vitro, sulfur can be provided by H(2)S. The sequence is that of Thiazole synthase from Cyanidium caldarium (Red alga).